The chain runs to 320 residues: Cytochrome f (320 aa).

An N-terminal signal peptide occupies residues Met-1–Ala-35. Heme-binding residues include Tyr-36, Cys-56, Cys-59, and His-60. A helical membrane pass occupies residues Val-286–Lys-306.

Belongs to the cytochrome f family. The 4 large subunits of the cytochrome b6-f complex are cytochrome b6, subunit IV (17 kDa polypeptide, petD), cytochrome f and the Rieske protein, while the 4 small subunits are PetG, PetL, PetM and PetN. The complex functions as a dimer. Requires heme as cofactor.

The protein localises to the plastid. The protein resides in the chloroplast thylakoid membrane. Its function is as follows. Component of the cytochrome b6-f complex, which mediates electron transfer between photosystem II (PSII) and photosystem I (PSI), cyclic electron flow around PSI, and state transitions. The polypeptide is Cytochrome f (Capsella bursa-pastoris (Shepherd's purse)).